The sequence spans 147 residues: Hemoglobin subunit beta-2 (147 aa).

Valine 2 is subject to N-acetylvaline. One can recognise a Globin domain in the interval 3 to 147; that stretch reads HLTDAEKSAV…VATALAHKYH (145 aa). Lysine 18 bears the N6-succinyllysine mark. Position 42 is a phosphotyrosine (tyrosine 42). 3 positions are modified to phosphoserine: serine 45, serine 51, and serine 53. The residue at position 60 (lysine 60) is an N6-succinyllysine. Heme b is bound by residues histidine 64 and histidine 93. The residue at position 105 (arginine 105) is an Asymmetric dimethylarginine. Threonine 124 is modified (phosphothreonine).

This sequence belongs to the globin family. As to quaternary structure, heterotetramer of two alpha chains and two beta chains. Red blood cells.

Its function is as follows. Involved in oxygen transport from the lung to the various peripheral tissues. In Mus musculus (Mouse), this protein is Hemoglobin subunit beta-2 (Hbb-b2).